Reading from the N-terminus, the 317-residue chain is tRNA dimethylallyltransferase (317 aa).

16 to 23 (GPTASGKS) serves as a coordination point for ATP. 18–23 (TASGKS) provides a ligand contact to substrate. Interaction with substrate tRNA stretches follow at residues 41–44 (DSAQ), 165–169 (QRIQR), and 247–252 (RCVGYR).

This sequence belongs to the IPP transferase family. As to quaternary structure, monomer. It depends on Mg(2+) as a cofactor.

The catalysed reaction is adenosine(37) in tRNA + dimethylallyl diphosphate = N(6)-dimethylallyladenosine(37) in tRNA + diphosphate. Catalyzes the transfer of a dimethylallyl group onto the adenine at position 37 in tRNAs that read codons beginning with uridine, leading to the formation of N6-(dimethylallyl)adenosine (i(6)A). This Nitrosomonas europaea (strain ATCC 19718 / CIP 103999 / KCTC 2705 / NBRC 14298) protein is tRNA dimethylallyltransferase.